The following is a 56-amino-acid chain: Small ribosomal subunit protein uS14 (56 aa).

Residues Cys-21, Cys-24, Cys-39, and Cys-42 each coordinate Zn(2+).

It belongs to the universal ribosomal protein uS14 family. In terms of assembly, component of the 40S small ribosomal subunit. The cofactor is Zn(2+).

The protein localises to the cytoplasm. It localises to the cytosol. Its subcellular location is the rough endoplasmic reticulum. The chain is Small ribosomal subunit protein uS14 (RpS29) from Drosophila melanogaster (Fruit fly).